The following is a 147-amino-acid chain: Hemoglobin subunit beta (147 aa).

At Val2 the chain carries N-acetylvaline. Positions 3–147 (NLTSDEKTAV…VANALAHKYH (145 aa)) constitute a Globin domain. The residue at position 45 (Ser45) is a Phosphoserine. Lys60 is modified (N6-acetyllysine). His64 contacts heme b. The residue at position 83 (Lys83) is an N6-acetyllysine. His93 is a heme b binding site. Position 94 is an S-nitrosocysteine (Cys94). N6-acetyllysine is present on Lys145.

Belongs to the globin family. As to quaternary structure, heterotetramer of two alpha chains and two beta chains. In terms of tissue distribution, red blood cells.

Its function is as follows. Involved in oxygen transport from the lung to the various peripheral tissues. This chain is Hemoglobin subunit beta (HBB), found in Dasypus novemcinctus (Nine-banded armadillo).